Reading from the N-terminus, the 250-residue chain is ATP synthase subunit a (250 aa).

A run of 5 helical transmembrane segments spans residues 27-47 (TDTV…AFYL), 86-106 (FVLP…WLAV), 129-149 (INYV…AGIW), 191-211 (IFAG…IMWA), and 219-239 (FDLF…ILYF).

This sequence belongs to the ATPase A chain family. As to quaternary structure, F-type ATPases have 2 components, CF(1) - the catalytic core - and CF(0) - the membrane proton channel. CF(1) has five subunits: alpha(3), beta(3), gamma(1), delta(1), epsilon(1). CF(0) has three main subunits: a(1), b(2) and c(9-12). The alpha and beta chains form an alternating ring which encloses part of the gamma chain. CF(1) is attached to CF(0) by a central stalk formed by the gamma and epsilon chains, while a peripheral stalk is formed by the delta and b chains.

It is found in the cell membrane. Key component of the proton channel; it plays a direct role in the translocation of protons across the membrane. In Mycobacterium bovis (strain ATCC BAA-935 / AF2122/97), this protein is ATP synthase subunit a.